A 572-amino-acid polypeptide reads, in one-letter code: Proline--tRNA ligase (572 aa).

This sequence belongs to the class-II aminoacyl-tRNA synthetase family. ProS type 1 subfamily. In terms of assembly, homodimer.

It localises to the cytoplasm. It catalyses the reaction tRNA(Pro) + L-proline + ATP = L-prolyl-tRNA(Pro) + AMP + diphosphate. Catalyzes the attachment of proline to tRNA(Pro) in a two-step reaction: proline is first activated by ATP to form Pro-AMP and then transferred to the acceptor end of tRNA(Pro). As ProRS can inadvertently accommodate and process non-cognate amino acids such as alanine and cysteine, to avoid such errors it has two additional distinct editing activities against alanine. One activity is designated as 'pretransfer' editing and involves the tRNA(Pro)-independent hydrolysis of activated Ala-AMP. The other activity is designated 'posttransfer' editing and involves deacylation of mischarged Ala-tRNA(Pro). The misacylated Cys-tRNA(Pro) is not edited by ProRS. This Yersinia pestis (strain Pestoides F) protein is Proline--tRNA ligase.